The chain runs to 197 residues: Phosphoheptose isomerase (197 aa).

One can recognise an SIS domain in the interval methionine 36–glutamate 197. Position 51 to 53 (asparagine 51 to glycine 53) interacts with substrate. Zn(2+)-binding residues include histidine 60 and glutamate 64. Substrate-binding positions include glutamate 64, asparagine 93–aspartate 94, serine 119–serine 121, serine 124, and glutamine 174. Positions 174 and 182 each coordinate Zn(2+).

The protein belongs to the SIS family. GmhA subfamily. As to quaternary structure, homotetramer. The cofactor is Zn(2+).

The protein resides in the cytoplasm. It carries out the reaction 2 D-sedoheptulose 7-phosphate = D-glycero-alpha-D-manno-heptose 7-phosphate + D-glycero-beta-D-manno-heptose 7-phosphate. The protein operates within carbohydrate biosynthesis; D-glycero-D-manno-heptose 7-phosphate biosynthesis; D-glycero-alpha-D-manno-heptose 7-phosphate and D-glycero-beta-D-manno-heptose 7-phosphate from sedoheptulose 7-phosphate: step 1/1. Its function is as follows. Catalyzes the isomerization of sedoheptulose 7-phosphate in D-glycero-D-manno-heptose 7-phosphate. This is Phosphoheptose isomerase from Pseudomonas putida (strain W619).